The following is a 735-amino-acid chain: Translation factor GUF1 homolog, chloroplastic (735 aa).

Disordered stretches follow at residues 1–38 and 106–126; these read MAVPTIPSPACISQSANGSIISTRRSTETNPRQHPSTS and PENAEKDYSKNGKAANKGVDN. The transit peptide at 1–47 directs the protein to the chloroplast; sequence MAVPTIPSPACISQSANGSIISTRRSTETNPRQHPSTSYRCAGRVVR. Over residues 11–38 the composition is skewed to polar residues; sequence CISQSANGSIISTRRSTETNPRQHPSTS. The segment covering 106–115 has biased composition (basic and acidic residues); the sequence is PENAEKDYSK. Residues 137 to 319 enclose the tr-type G domain; the sequence is SNIRNFSIIA…AVVKKIPPPK (183 aa). Residues 146–153, 212–216, and 266–269 each bind GTP; these read AHIDHGKS, DTPGH, and NKID.

The protein belongs to the TRAFAC class translation factor GTPase superfamily. Classic translation factor GTPase family. LepA subfamily.

It is found in the plastid. The protein resides in the chloroplast. It carries out the reaction GTP + H2O = GDP + phosphate + H(+). Its function is as follows. Promotes chloroplast protein synthesis. May act as a fidelity factor of the translation reaction, by catalyzing a one-codon backward translocation of tRNAs on improperly translocated ribosomes. The polypeptide is Translation factor GUF1 homolog, chloroplastic (Physcomitrium patens (Spreading-leaved earth moss)).